The sequence spans 303 residues: Phosphatidylglycerol--prolipoprotein diacylglyceryl transferase (303 aa).

The next 3 helical transmembrane spans lie at 18-38, 58-78, and 107-127; these read VGFFTLRWYGLLIAFAVLIGL, LLPILVISSIIGARAYYVIFE, and WQGGIAIHGALLAGTIAILIF. Arg154 contacts a 1,2-diacyl-sn-glycero-3-phospho-(1'-sn-glycerol). 2 consecutive transmembrane segments (helical) span residues 193 to 213 and 266 to 286; these read PTFLYESIWNILLFLCLISLI and IAQLISTILFGLGLLGLFWIY.

It belongs to the Lgt family.

The protein localises to the cell inner membrane. It catalyses the reaction L-cysteinyl-[prolipoprotein] + a 1,2-diacyl-sn-glycero-3-phospho-(1'-sn-glycerol) = an S-1,2-diacyl-sn-glyceryl-L-cysteinyl-[prolipoprotein] + sn-glycerol 1-phosphate + H(+). It participates in protein modification; lipoprotein biosynthesis (diacylglyceryl transfer). In terms of biological role, catalyzes the transfer of the diacylglyceryl group from phosphatidylglycerol to the sulfhydryl group of the N-terminal cysteine of a prolipoprotein, the first step in the formation of mature lipoproteins. The protein is Phosphatidylglycerol--prolipoprotein diacylglyceryl transferase of Prochlorococcus marinus (strain MIT 9211).